Here is a 336-residue protein sequence, read N- to C-terminus: Dihydroorotate dehydrogenase (quinone) (336 aa).

FMN is bound by residues 62–66 (AGLDK) and T86. Residue K66 participates in substrate binding. 111–115 (NRMGF) is a substrate binding site. Residues N139 and N172 each contribute to the FMN site. N172 is a binding site for substrate. The active-site Nucleophile is S175. N177 serves as a coordination point for substrate. The FMN site is built by K217 and T245. 246-247 (NT) is a substrate binding site. FMN is bound by residues G268, G297, and 318–319 (YT).

The protein belongs to the dihydroorotate dehydrogenase family. Type 2 subfamily. Monomer. FMN serves as cofactor.

The protein localises to the cell membrane. It carries out the reaction (S)-dihydroorotate + a quinone = orotate + a quinol. It participates in pyrimidine metabolism; UMP biosynthesis via de novo pathway; orotate from (S)-dihydroorotate (quinone route): step 1/1. In terms of biological role, catalyzes the conversion of dihydroorotate to orotate with quinone as electron acceptor. The chain is Dihydroorotate dehydrogenase (quinone) from Vibrio parahaemolyticus serotype O3:K6 (strain RIMD 2210633).